The following is a 255-amino-acid chain: Indole-3-glycerol phosphate synthase (255 aa).

It belongs to the TrpC family.

The catalysed reaction is 1-(2-carboxyphenylamino)-1-deoxy-D-ribulose 5-phosphate + H(+) = (1S,2R)-1-C-(indol-3-yl)glycerol 3-phosphate + CO2 + H2O. Its pathway is amino-acid biosynthesis; L-tryptophan biosynthesis; L-tryptophan from chorismate: step 4/5. This Streptococcus pneumoniae (strain Hungary19A-6) protein is Indole-3-glycerol phosphate synthase.